We begin with the raw amino-acid sequence, 638 residues long: 1-deoxy-D-xylulose-5-phosphate synthase (638 aa).

Thiamine diphosphate is bound by residues histidine 81 and glycine 122–serine 124. Aspartate 153 serves as a coordination point for Mg(2+). Thiamine diphosphate is bound by residues glycine 154–serine 155, asparagine 182, tyrosine 293, and glutamate 377. Asparagine 182 is a binding site for Mg(2+).

Belongs to the transketolase family. DXPS subfamily. Homodimer. Mg(2+) serves as cofactor. The cofactor is thiamine diphosphate.

The enzyme catalyses D-glyceraldehyde 3-phosphate + pyruvate + H(+) = 1-deoxy-D-xylulose 5-phosphate + CO2. It participates in metabolic intermediate biosynthesis; 1-deoxy-D-xylulose 5-phosphate biosynthesis; 1-deoxy-D-xylulose 5-phosphate from D-glyceraldehyde 3-phosphate and pyruvate: step 1/1. In terms of biological role, catalyzes the acyloin condensation reaction between C atoms 2 and 3 of pyruvate and glyceraldehyde 3-phosphate to yield 1-deoxy-D-xylulose-5-phosphate (DXP). This Oleidesulfovibrio alaskensis (strain ATCC BAA-1058 / DSM 17464 / G20) (Desulfovibrio alaskensis) protein is 1-deoxy-D-xylulose-5-phosphate synthase.